We begin with the raw amino-acid sequence, 312 residues long: Acyl-CoA C20 Delta5-desaturase (312 aa).

The next 2 membrane-spanning stretches (helical) occupy residues 45 to 65 and 69 to 89; these read VFHI…PSTF and SFWV…TLSF. Fe cation-binding residues include H90, H95, H127, H130, and H131. A Histidine box-1 motif is present at residues 90–95; the sequence is HRNLTH. The short motif at 127–131 is the Histidine box-2 element; that stretch reads HRYHH. The helical transmembrane segment at 193–213 threads the bilayer; the sequence is LQAALLYLFGGFPFIVWGMAV. Residues H230, H259, H262, and H263 each coordinate Fe cation. The short motif at 259-263 is the Histidine box-3 element; the sequence is HNNHH.

It belongs to the fatty acid desaturase type 1 family. Fe(2+) serves as cofactor.

Its subcellular location is the membrane. It catalyses the reaction (11Z,14Z)-eicosadienoyl-CoA + AH2 + O2 = (5Z,11Z,14Z)-eicosatrienoyl-CoA + A + 2 H2O. The catalysed reaction is (11Z,14Z,17Z)-eicosatrienoyl-CoA + AH2 + O2 = (5Z,11Z,14Z,17Z)-eicosatetraenoyl-CoA + A + 2 H2O. The protein operates within lipid metabolism; polyunsaturated fatty acid biosynthesis. Its function is as follows. Catalyzes the desaturation of 20:2Delta(11,14) and 20:3Delta(11,14,17) to generate sciadonic acid (20:3Delta(5,11,14)) and juniperonic acid (20:4Delta(5,11,14,17)). The chain is Acyl-CoA C20 Delta5-desaturase from Anemone leveillei (Windflower).